Reading from the N-terminus, the 370-residue chain is Dual-specificity RNA methyltransferase RlmN (370 aa).

E93 (proton acceptor) is an active-site residue. The Radical SAM core domain occupies 99-337; it reads EEGRGTLCVS…VTTVRKTRGD (239 aa). C106 and C343 are joined by a disulfide. C113, C117, and C120 together coordinate [4Fe-4S] cluster. S-adenosyl-L-methionine is bound by residues 167 to 168, S199, 221 to 223, and N300; these read GE and SLH. C343 acts as the S-methylcysteine intermediate in catalysis.

This sequence belongs to the radical SAM superfamily. RlmN family. [4Fe-4S] cluster is required as a cofactor.

The protein localises to the cytoplasm. The catalysed reaction is adenosine(2503) in 23S rRNA + 2 reduced [2Fe-2S]-[ferredoxin] + 2 S-adenosyl-L-methionine = 2-methyladenosine(2503) in 23S rRNA + 5'-deoxyadenosine + L-methionine + 2 oxidized [2Fe-2S]-[ferredoxin] + S-adenosyl-L-homocysteine. It catalyses the reaction adenosine(37) in tRNA + 2 reduced [2Fe-2S]-[ferredoxin] + 2 S-adenosyl-L-methionine = 2-methyladenosine(37) in tRNA + 5'-deoxyadenosine + L-methionine + 2 oxidized [2Fe-2S]-[ferredoxin] + S-adenosyl-L-homocysteine. In terms of biological role, specifically methylates position 2 of adenine 2503 in 23S rRNA and position 2 of adenine 37 in tRNAs. m2A2503 modification seems to play a crucial role in the proofreading step occurring at the peptidyl transferase center and thus would serve to optimize ribosomal fidelity. The chain is Dual-specificity RNA methyltransferase RlmN from Francisella tularensis subsp. tularensis (strain WY96-3418).